The primary structure comprises 211 residues: N-(5'-phosphoribosyl)anthranilate isomerase (211 aa).

The protein belongs to the TrpF family.

It carries out the reaction N-(5-phospho-beta-D-ribosyl)anthranilate = 1-(2-carboxyphenylamino)-1-deoxy-D-ribulose 5-phosphate. It participates in amino-acid biosynthesis; L-tryptophan biosynthesis; L-tryptophan from chorismate: step 3/5. In Methanococcus maripaludis (strain C6 / ATCC BAA-1332), this protein is N-(5'-phosphoribosyl)anthranilate isomerase.